The sequence spans 69 residues: DNA gyrase inhibitor YacG (69 aa).

Zn(2+)-binding residues include Cys14, Cys17, Cys33, and Cys37.

The protein belongs to the DNA gyrase inhibitor YacG family. As to quaternary structure, interacts with GyrB. Zn(2+) serves as cofactor.

Its function is as follows. Inhibits all the catalytic activities of DNA gyrase by preventing its interaction with DNA. Acts by binding directly to the C-terminal domain of GyrB, which probably disrupts DNA binding by the gyrase. In Aliivibrio salmonicida (strain LFI1238) (Vibrio salmonicida (strain LFI1238)), this protein is DNA gyrase inhibitor YacG.